We begin with the raw amino-acid sequence, 349 residues long: Protein-glutamate methylesterase/protein-glutamine glutaminase (349 aa).

The 118-residue stretch at 5–122 folds into the Response regulatory domain; the sequence is RVLSVDDSAL…REGMLAYSEM (118 aa). Position 56 is a 4-aspartylphosphate (D56). A CheB-type methylesterase domain is found at 152–344; the sequence is LLSSEKLIAI…QQMLAKISAG (193 aa). Active-site residues include S164, H190, and D286.

It belongs to the CheB family. Phosphorylated by CheA. Phosphorylation of the N-terminal regulatory domain activates the methylesterase activity.

The protein localises to the cytoplasm. The enzyme catalyses [protein]-L-glutamate 5-O-methyl ester + H2O = L-glutamyl-[protein] + methanol + H(+). It carries out the reaction L-glutaminyl-[protein] + H2O = L-glutamyl-[protein] + NH4(+). In terms of biological role, involved in chemotaxis. Part of a chemotaxis signal transduction system that modulates chemotaxis in response to various stimuli. Catalyzes the demethylation of specific methylglutamate residues introduced into the chemoreceptors (methyl-accepting chemotaxis proteins or MCP) by CheR. Also mediates the irreversible deamidation of specific glutamine residues to glutamic acid. The chain is Protein-glutamate methylesterase/protein-glutamine glutaminase from Escherichia coli O6:K15:H31 (strain 536 / UPEC).